The sequence spans 77 residues: Translation initiation factor IF-1, chloroplastic (77 aa).

Residues 1-71 (MKEQKLIHEG…TRGRIIYRLR (71 aa)) form the S1-like domain.

Belongs to the IF-1 family. As to quaternary structure, component of the 30S ribosomal translation pre-initiation complex which assembles on the 30S ribosome in the order IF-2 and IF-3, IF-1 and N-formylmethionyl-tRNA(fMet); mRNA recruitment can occur at any time during PIC assembly.

It is found in the plastid. The protein localises to the chloroplast. In terms of biological role, one of the essential components for the initiation of protein synthesis. Stabilizes the binding of IF-2 and IF-3 on the 30S subunit to which N-formylmethionyl-tRNA(fMet) subsequently binds. Helps modulate mRNA selection, yielding the 30S pre-initiation complex (PIC). Upon addition of the 50S ribosomal subunit IF-1, IF-2 and IF-3 are released leaving the mature 70S translation initiation complex. This chain is Translation initiation factor IF-1, chloroplastic, found in Liriodendron tulipifera (Tuliptree).